A 471-amino-acid chain; its full sequence is MTDLPDSTRWQLWIVAFGFFMQSLDTTIVNTALPSMAQSLGESPLHMHMVIVSYVLTVAVMLPASGWLADKVGVRNIFFTAIVLFTLGSLFCALSGTLNELLLARALQGVGGAMMVPVGRLTVMKIVPREQYMAAMTFVTLPGQVGPLLGPALGGLLVEYASWHWIFLINIPVGIIGAIATLMLMPNYTMQTRRFDLSGFLLLAVGMAVLTLALDGSKGTGLSPLAIAGLVAVGVVALVLYLLHARNNNRALFSLKLFRTRTFSLGLAGSFAGRIGSGMLPFMTPVFLQIGLGFSPFHAGLMMIPMVLGSMGMKRIVVQVVNRFGYRRVLVATTLGLSLVTMLFMTTALLGWYYVLPFVLFLQGMVNSTRFSSMNTLTLKDLPDNLASSGNSLLSMIMQLSMSIGVTIAGLLLGLFGSQHVSVDSGTTQTVFMYTWLSMAFIIALPAFIFARVPNDTHQNVAISRRKRSAQ.

The Periplasmic segment spans residues 1–11 (MTDLPDSTRWQ). The chain crosses the membrane as a helical span at residues 12–32 (LWIVAFGFFMQSLDTTIVNTA). Residues 33-48 (LPSMAQSLGESPLHMH) lie on the Cytoplasmic side of the membrane. Residues 49–69 (MVIVSYVLTVAVMLPASGWLA) traverse the membrane as a helical segment. The Periplasmic portion of the chain corresponds to 70 to 76 (DKVGVRN). The chain crosses the membrane as a helical span at residues 77–97 (IFFTAIVLFTLGSLFCALSGT). Topologically, residues 98–101 (LNEL) are cytoplasmic. The helical transmembrane segment at 102 to 124 (LLARALQGVGGAMMVPVGRLTVM) threads the bilayer. At 125 to 137 (KIVPREQYMAAMT) the chain is on the periplasmic side. The chain crosses the membrane as a helical span at residues 138-158 (FVTLPGQVGPLLGPALGGLLV). Residues 159 to 164 (EYASWH) lie on the Cytoplasmic side of the membrane. Residues 165–185 (WIFLINIPVGIIGAIATLMLM) traverse the membrane as a helical segment. Residues 186–196 (PNYTMQTRRFD) are Periplasmic-facing. The chain crosses the membrane as a helical span at residues 197–217 (LSGFLLLAVGMAVLTLALDGS). The Cytoplasmic segment spans residues 218–224 (KGTGLSP). The chain crosses the membrane as a helical span at residues 225 to 245 (LAIAGLVAVGVVALVLYLLHA). Topologically, residues 246-262 (RNNNRALFSLKLFRTRT) are periplasmic. Residues 263 to 283 (FSLGLAGSFAGRIGSGMLPFM) traverse the membrane as a helical segment. Residues 284 to 285 (TP) are Cytoplasmic-facing. Residues 286-306 (VFLQIGLGFSPFHAGLMMIPM) form a helical membrane-spanning segment. At 307 to 341 (VLGSMGMKRIVVQVVNRFGYRRVLVATTLGLSLVT) the chain is on the periplasmic side. The chain crosses the membrane as a helical span at residues 342–362 (MLFMTTALLGWYYVLPFVLFL). Residues 363-395 (QGMVNSTRFSSMNTLTLKDLPDNLASSGNSLLS) lie on the Cytoplasmic side of the membrane. A helical transmembrane segment spans residues 396-416 (MIMQLSMSIGVTIAGLLLGLF). Residues 417-430 (GSQHVSVDSGTTQT) are Periplasmic-facing. Residues 431–451 (VFMYTWLSMAFIIALPAFIFA) traverse the membrane as a helical segment. Over 452-471 (RVPNDTHQNVAISRRKRSAQ) the chain is Cytoplasmic.

Belongs to the major facilitator superfamily. TCR/Tet family.

Its subcellular location is the cell inner membrane. This Escherichia coli O7:K1 (strain IAI39 / ExPEC) protein is Putative multidrug resistance protein MdtD.